The following is a 389-amino-acid chain: Acetyl-CoA decarbonylase/synthase complex subunit delta (389 aa).

It belongs to the CdhD family. Heterodimer of delta and gamma chains. The ACDS complex is made up of alpha, epsilon, beta, gamma and delta chains with a probable stoichiometry of (alpha(2)epsilon(2))(4)-beta(8)-(gamma(1)delta(1))(8).

Its function is as follows. Part of a complex that catalyzes the reversible cleavage of acetyl-CoA, allowing autotrophic growth from CO(2). Probably maintains the overall quaternary structure of the ACDS complex. In Methanothermobacter thermautotrophicus (strain ATCC 29096 / DSM 1053 / JCM 10044 / NBRC 100330 / Delta H) (Methanobacterium thermoautotrophicum), this protein is Acetyl-CoA decarbonylase/synthase complex subunit delta.